A 551-amino-acid chain; its full sequence is Membrane protein insertase YidC (551 aa).

Residues 3 to 23 (ANHIRILLLVTIAIMFISLMG) traverse the membrane as a helical segment. The segment covering 33-47 (NTKQQTSATQNNSHY) has biased composition (polar residues). Positions 33–59 (NTKQQTSATQNNSHYDNADSSTNTDVT) are disordered. Low complexity predominate over residues 50–59 (ADSSTNTDVT). 3 helical membrane-spanning segments follow: residues 361-381 (LVGN…LIFY), 431-451 (LSGC…YWVL), and 504-524 (VMMF…SGLV).

Belongs to the OXA1/ALB3/YidC family. Type 1 subfamily. Interacts with the Sec translocase complex via SecD. Specifically interacts with transmembrane segments of nascent integral membrane proteins during membrane integration.

It is found in the cell inner membrane. Its function is as follows. Required for the insertion and/or proper folding and/or complex formation of integral membrane proteins into the membrane. Involved in integration of membrane proteins that insert both dependently and independently of the Sec translocase complex, as well as at least some lipoproteins. Aids folding of multispanning membrane proteins. The protein is Membrane protein insertase YidC of Francisella tularensis subsp. mediasiatica (strain FSC147).